Consider the following 101-residue polypeptide: NAD(P)H-quinone oxidoreductase subunit 4L, chloroplastic (101 aa).

A run of 3 helical transmembrane segments spans residues 2–22 (MLEH…YGLI), 32–52 (MCLE…SGFF), and 61–81 (IFSV…LAIV).

The protein belongs to the complex I subunit 4L family. As to quaternary structure, NDH is composed of at least 16 different subunits, 5 of which are encoded in the nucleus.

The protein resides in the plastid. Its subcellular location is the chloroplast thylakoid membrane. The catalysed reaction is a plastoquinone + NADH + (n+1) H(+)(in) = a plastoquinol + NAD(+) + n H(+)(out). It carries out the reaction a plastoquinone + NADPH + (n+1) H(+)(in) = a plastoquinol + NADP(+) + n H(+)(out). NDH shuttles electrons from NAD(P)H:plastoquinone, via FMN and iron-sulfur (Fe-S) centers, to quinones in the photosynthetic chain and possibly in a chloroplast respiratory chain. The immediate electron acceptor for the enzyme in this species is believed to be plastoquinone. Couples the redox reaction to proton translocation, and thus conserves the redox energy in a proton gradient. The protein is NAD(P)H-quinone oxidoreductase subunit 4L, chloroplastic of Jasminum nudiflorum (Winter jasmine).